Consider the following 219-residue polypeptide: MMDEKELYEKWMRTVEMLKAEGIIRSKEVERAFLKYPRYLFVEDKYKKYAHIDEPLPIPAGQTVSAPHMVAIMLEIANLKPGMNILEVGTGSGWNAALISEIVKTDVYTIERIPELVEFAKRNLERAGVKNVHVILGDGSKGFPPKAPYDVIIVTAGAPKIPEPLIEQLKIGGKLIIPVGSYHLWQELLEVRKTKDGIKIKNHGGVAFVPLIGEYGWKE.

The active site involves serine 65.

Belongs to the methyltransferase superfamily. L-isoaspartyl/D-aspartyl protein methyltransferase family. Monomer.

Its subcellular location is the cytoplasm. It carries out the reaction [protein]-L-isoaspartate + S-adenosyl-L-methionine = [protein]-L-isoaspartate alpha-methyl ester + S-adenosyl-L-homocysteine. Catalyzes the methyl esterification of L-isoaspartyl residues in peptides and proteins that result from spontaneous decomposition of normal L-aspartyl and L-asparaginyl residues. It plays a role in the repair and/or degradation of damaged proteins. This chain is Protein-L-isoaspartate O-methyltransferase (pcm), found in Pyrococcus furiosus (strain ATCC 43587 / DSM 3638 / JCM 8422 / Vc1).